Here is a 142-residue protein sequence, read N- to C-terminus: Large ribosomal subunit protein uL13 (142 aa).

Belongs to the universal ribosomal protein uL13 family. As to quaternary structure, part of the 50S ribosomal subunit.

This protein is one of the early assembly proteins of the 50S ribosomal subunit, although it is not seen to bind rRNA by itself. It is important during the early stages of 50S assembly. The polypeptide is Large ribosomal subunit protein uL13 (Pseudoalteromonas translucida (strain TAC 125)).